The chain runs to 51 residues: Insulin (51 aa).

3 cysteine pairs are disulfide-bonded: C7-C37, C19-C50, and C36-C41.

This sequence belongs to the insulin family. In terms of assembly, heterodimer of a B chain and an A chain linked by two disulfide bonds.

It is found in the secreted. In terms of biological role, insulin decreases blood glucose concentration. It increases cell permeability to monosaccharides, amino acids and fatty acids. It accelerates glycolysis, the pentose phosphate cycle, and glycogen synthesis in liver. In Camelus dromedarius (Dromedary), this protein is Insulin (INS).